The chain runs to 320 residues: Transmembrane protein 41 homolog (320 aa).

Residues glycine 20–alanine 72 form a disordered region. Residues proline 43–glutamine 68 show a composition bias toward low complexity. 6 helical membrane passes run valine 83–phenylalanine 103, valine 141–leucine 161, phenylalanine 173–serine 195, leucine 225–phenylalanine 242, leucine 245–valine 265, and phenylalanine 289–leucine 309.

It belongs to the TMEM41 family. In embryos, strongly expressed in the nervous system.

Its subcellular location is the membrane. Its function is as follows. Required in cholinergic neurons, but not in motor neurons, for normal neurotransmitter release by motor neurons. Involved in muscle growth. The chain is Transmembrane protein 41 homolog (stas) from Drosophila melanogaster (Fruit fly).